The sequence spans 419 residues: UDP-N-acetylglucosamine 1-carboxyvinyltransferase (419 aa).

22–23 serves as a coordination point for phosphoenolpyruvate; sequence KN. R91 is a UDP-N-acetyl-alpha-D-glucosamine binding site. The active-site Proton donor is C115. C115 carries the post-translational modification 2-(S-cysteinyl)pyruvic acid O-phosphothioketal. UDP-N-acetyl-alpha-D-glucosamine-binding positions include 120-124, 160-163, D305, and V327; these read RPVDL and KVSV.

Belongs to the EPSP synthase family. MurA subfamily.

It localises to the cytoplasm. It catalyses the reaction phosphoenolpyruvate + UDP-N-acetyl-alpha-D-glucosamine = UDP-N-acetyl-3-O-(1-carboxyvinyl)-alpha-D-glucosamine + phosphate. It functions in the pathway cell wall biogenesis; peptidoglycan biosynthesis. In terms of biological role, cell wall formation. Adds enolpyruvyl to UDP-N-acetylglucosamine. This chain is UDP-N-acetylglucosamine 1-carboxyvinyltransferase, found in Salmonella agona (strain SL483).